The following is a 543-amino-acid chain: RuBisCO large subunit-binding protein subunit alpha, chloroplastic (543 aa).

The transit peptide at 1–2 (GA) directs the protein to the chloroplast.

This sequence belongs to the chaperonin (HSP60) family. Oligomer of probably six alpha and six beta subunits.

It localises to the plastid. The protein resides in the chloroplast. Its function is as follows. This protein binds RuBisCO small and large subunits and is implicated in the assembly of the enzyme oligomer. The sequence is that of RuBisCO large subunit-binding protein subunit alpha, chloroplastic from Triticum aestivum (Wheat).